The chain runs to 270 residues: Phosphonoacetaldehyde hydrolase (270 aa).

The active-site Nucleophile is the aspartate 11. Positions 11 and 13 each coordinate Mg(2+). Lysine 53 (schiff-base intermediate with substrate) is an active-site residue. Aspartate 187 serves as a coordination point for Mg(2+).

The protein belongs to the HAD-like hydrolase superfamily. PhnX family. As to quaternary structure, homodimer. Mg(2+) is required as a cofactor.

The enzyme catalyses phosphonoacetaldehyde + H2O = acetaldehyde + phosphate + H(+). Functionally, involved in phosphonate degradation. This is Phosphonoacetaldehyde hydrolase from Salmonella paratyphi C (strain RKS4594).